Consider the following 424-residue polypeptide: Tubulin gamma chain, nucleomorph (424 aa).

GTP is bound at residue 137-143 (NGGTGAG).

The protein belongs to the tubulin family.

Its function is as follows. Tubulin is the major constituent of microtubules. The gamma chain is found at microtubule organizing centers (MTOC) such as the spindle poles or the centrosome, suggesting that it is involved in the minus-end nucleation of microtubule assembly. This Guillardia theta (Cryptophyte) protein is Tubulin gamma chain, nucleomorph (tubG).